The chain runs to 187 residues: MKTQKLLQGINIYLIGMMGSGKSTIGKILAQRLDYRFFDTDILIERVTQQSINDIFVTQGETVFRDIETQVLSEVAACTRSVIATGGGIVLNSQNWSYLHHGLIIWLDVSIKLLKTRLINDTTRPLLKESDLTLKLKTLDEQRRNLYNKADLTIVINQNRTPESIVSEILEAIPTVIKPKVEANQFN.

19 to 24 (GSGKST) lines the ATP pocket. A Mg(2+)-binding site is contributed by serine 23. Positions 41, 65, and 87 each coordinate substrate. Residue arginine 124 participates in ATP binding. Arginine 143 is a binding site for substrate. Arginine 160 lines the ATP pocket.

Belongs to the shikimate kinase family. In terms of assembly, monomer. It depends on Mg(2+) as a cofactor.

Its subcellular location is the cytoplasm. It catalyses the reaction shikimate + ATP = 3-phosphoshikimate + ADP + H(+). Its pathway is metabolic intermediate biosynthesis; chorismate biosynthesis; chorismate from D-erythrose 4-phosphate and phosphoenolpyruvate: step 5/7. Catalyzes the specific phosphorylation of the 3-hydroxyl group of shikimic acid using ATP as a cosubstrate. The polypeptide is Shikimate kinase (Rippkaea orientalis (strain PCC 8801 / RF-1) (Cyanothece sp. (strain PCC 8801))).